A 400-amino-acid chain; its full sequence is Capsid protein (400 aa).

Over residues 1–10 the composition is skewed to polar residues; that stretch reads MDPNLDQDTL. The segment at 1 to 54 is disordered; sequence MDPNLDQDTLPTHEEIDNDVDSAEEEPPEPPLLPDDIDDDDSHGSRTRRQVKPP. Positions 16–28 are enriched in acidic residues; that stretch reads IDNDVDSAEEEPP.

It belongs to the potexvirus capsid protein family.

It is found in the virion. Functionally, required for genome encapsidation. The chain is Capsid protein (ORF3) from Botryotinia fuckeliana (Noble rot fungus).